We begin with the raw amino-acid sequence, 476 residues long: Glutamyl-tRNA(Gln) amidotransferase subunit A (476 aa).

Catalysis depends on charge relay system residues Lys-77 and Ser-152. Ser-176 acts as the Acyl-ester intermediate in catalysis.

This sequence belongs to the amidase family. GatA subfamily. Heterotrimer of A, B and C subunits.

It catalyses the reaction L-glutamyl-tRNA(Gln) + L-glutamine + ATP + H2O = L-glutaminyl-tRNA(Gln) + L-glutamate + ADP + phosphate + H(+). Allows the formation of correctly charged Gln-tRNA(Gln) through the transamidation of misacylated Glu-tRNA(Gln) in organisms which lack glutaminyl-tRNA synthetase. The reaction takes place in the presence of glutamine and ATP through an activated gamma-phospho-Glu-tRNA(Gln). The sequence is that of Glutamyl-tRNA(Gln) amidotransferase subunit A from Acidobacterium capsulatum (strain ATCC 51196 / DSM 11244 / BCRC 80197 / JCM 7670 / NBRC 15755 / NCIMB 13165 / 161).